The following is a 221-amino-acid chain: Riboflavin kinase (221 aa).

The interval 1 to 92 (MVTPEDLECL…YRLFGRQEKS (92 aa)) is H-T-H motif-like. The tract at residues 93-221 (LMLNGTVQSG…GDEVTIEVTL (129 aa)) is riboflavin kinase. 102-107 (GLGEGA) contributes to the CDP binding site. Positions 131 and 133 each coordinate Mg(2+). FMN-binding residues include Thr188 and Glu196. 201-204 (EGLR) serves as a coordination point for CDP.

It belongs to the archaeal riboflavin kinase family. Requires Mg(2+) as cofactor.

The catalysed reaction is riboflavin + CTP = CDP + FMN + H(+). The protein operates within cofactor biosynthesis; FMN biosynthesis; FMN from riboflavin (CTP route): step 1/1. Functionally, catalyzes the CTP-dependent phosphorylation of riboflavin (vitamin B2) to form flavin mononucleotide (FMN). The sequence is that of Riboflavin kinase (ribK) from Methanospirillum hungatei JF-1 (strain ATCC 27890 / DSM 864 / NBRC 100397 / JF-1).